The following is a 168-amino-acid chain: uncharacterized protein (168 aa).

The signal sequence occupies residues Met-1–Ala-21.

This is an uncharacterized protein from Archaeoglobus fulgidus (strain ATCC 49558 / DSM 4304 / JCM 9628 / NBRC 100126 / VC-16).